Reading from the N-terminus, the 246-residue chain is 4-hydroxy-tetrahydrodipicolinate reductase (246 aa).

NAD(+) contacts are provided by residues 8 to 13, 75 to 77, and 99 to 102; these read GISGRM, GTT, and ASNY. His-132 serves as the catalytic Proton donor/acceptor. Position 133 (His-133) interacts with (S)-2,3,4,5-tetrahydrodipicolinate. Lys-136 serves as the catalytic Proton donor. Residue 142-143 coordinates (S)-2,3,4,5-tetrahydrodipicolinate; it reads GT.

It belongs to the DapB family.

The protein localises to the cytoplasm. It catalyses the reaction (S)-2,3,4,5-tetrahydrodipicolinate + NAD(+) + H2O = (2S,4S)-4-hydroxy-2,3,4,5-tetrahydrodipicolinate + NADH + H(+). The catalysed reaction is (S)-2,3,4,5-tetrahydrodipicolinate + NADP(+) + H2O = (2S,4S)-4-hydroxy-2,3,4,5-tetrahydrodipicolinate + NADPH + H(+). Its pathway is amino-acid biosynthesis; L-lysine biosynthesis via DAP pathway; (S)-tetrahydrodipicolinate from L-aspartate: step 4/4. Catalyzes the conversion of 4-hydroxy-tetrahydrodipicolinate (HTPA) to tetrahydrodipicolinate. This Akkermansia muciniphila (strain ATCC BAA-835 / DSM 22959 / JCM 33894 / BCRC 81048 / CCUG 64013 / CIP 107961 / Muc) protein is 4-hydroxy-tetrahydrodipicolinate reductase.